Here is a 193-residue protein sequence, read N- to C-terminus: dCTP deaminase, dUMP-forming (193 aa).

Residues 101-106 (KSSLGR), Asp-119, 127-129 (TLE), Gln-148, Tyr-162, and Gln-174 each bind dCTP. Glu-129 functions as the Proton donor/acceptor in the catalytic mechanism. Residues 162 to 184 (YGSKGTGSHYQGQRGPTPSRSYE) form a disordered region. The segment covering 167-183 (TGSHYQGQRGPTPSRSY) has biased composition (polar residues).

This sequence belongs to the dCTP deaminase family. In terms of assembly, homotrimer.

It carries out the reaction dCTP + 2 H2O = dUMP + NH4(+) + diphosphate. It functions in the pathway pyrimidine metabolism; dUMP biosynthesis; dUMP from dCTP: step 1/1. Its function is as follows. Bifunctional enzyme that catalyzes both the deamination of dCTP to dUTP and the hydrolysis of dUTP to dUMP without releasing the toxic dUTP intermediate. In Bifidobacterium longum (strain DJO10A), this protein is dCTP deaminase, dUMP-forming.